Consider the following 201-residue polypeptide: Flagellin B1 (201 aa).

The propeptide occupies 1 to 11 (MFEQNDDRDRG).

The protein belongs to the archaeal flagellin family.

Its subcellular location is the archaeal flagellum. In terms of biological role, flagellin is the subunit protein which polymerizes to form the filaments of archaeal flagella. In Natrialba magadii (strain ATCC 43099 / DSM 3394 / CCM 3739 / CIP 104546 / IAM 13178 / JCM 8861 / NBRC 102185 / NCIMB 2190 / MS3) (Natronobacterium magadii), this protein is Flagellin B1 (flaB1).